The primary structure comprises 529 residues: Probable threonine/serine exporter (529 aa).

Transmembrane regions (helical) follow at residues 88–108, 168–188, 212–232, 234–254, 265–285, 312–332, 344–364, 365–385, 389–409, and 428–448; these read ITVT…PVTI, FALG…LAAV, VFGA…AGQD, TALV…VGSM, ALAR…GILI, MPLP…CLTI, AGLS…AGFG, RVVA…LISI, APAL…LAVF, and LLEA…GEFL. The interval 482-501 is disordered; it reads QPAKSQQPTGTGGQRWRSVA.

The protein belongs to the ThrE exporter (TC 2.A.79) family.

It is found in the cell membrane. It catalyses the reaction L-threonine(in) + H(+)(out) = L-threonine(out) + H(+)(in). In terms of biological role, catalyzes the export of L-threonine and L-serine from the cell to the extracellular environment. Export is dependent on the proton motive force. Required for in vitro growth and survival of bacteria inside macrophages. Increased expression is associated with low-level amikacin (AMK) resistance. The chain is Probable threonine/serine exporter from Mycobacterium tuberculosis (strain ATCC 25618 / H37Rv).